The following is a 513-amino-acid chain: ATP synthase subunit alpha (513 aa).

169-176 (GDRQTGKT) serves as a coordination point for ATP.

Belongs to the ATPase alpha/beta chains family. F-type ATPases have 2 components, CF(1) - the catalytic core - and CF(0) - the membrane proton channel. CF(1) has five subunits: alpha(3), beta(3), gamma(1), delta(1), epsilon(1). CF(0) has three main subunits: a(1), b(2) and c(9-12). The alpha and beta chains form an alternating ring which encloses part of the gamma chain. CF(1) is attached to CF(0) by a central stalk formed by the gamma and epsilon chains, while a peripheral stalk is formed by the delta and b chains.

The protein resides in the cell inner membrane. It catalyses the reaction ATP + H2O + 4 H(+)(in) = ADP + phosphate + 5 H(+)(out). Its function is as follows. Produces ATP from ADP in the presence of a proton gradient across the membrane. The alpha chain is a regulatory subunit. In Edwardsiella ictaluri (strain 93-146), this protein is ATP synthase subunit alpha.